Here is a 279-residue protein sequence, read N- to C-terminus: Tryptophan synthase alpha chain (279 aa).

Active-site proton acceptor residues include glutamate 50 and aspartate 61.

The protein belongs to the TrpA family. In terms of assembly, tetramer of two alpha and two beta chains.

It catalyses the reaction (1S,2R)-1-C-(indol-3-yl)glycerol 3-phosphate + L-serine = D-glyceraldehyde 3-phosphate + L-tryptophan + H2O. Its pathway is amino-acid biosynthesis; L-tryptophan biosynthesis; L-tryptophan from chorismate: step 5/5. The alpha subunit is responsible for the aldol cleavage of indoleglycerol phosphate to indole and glyceraldehyde 3-phosphate. In Brucella ovis (strain ATCC 25840 / 63/290 / NCTC 10512), this protein is Tryptophan synthase alpha chain.